Reading from the N-terminus, the 238-residue chain is DNA repair protein RecO (238 aa).

Belongs to the RecO family.

In terms of biological role, involved in DNA repair and RecF pathway recombination. The polypeptide is DNA repair protein RecO (Cereibacter sphaeroides (strain ATCC 17023 / DSM 158 / JCM 6121 / CCUG 31486 / LMG 2827 / NBRC 12203 / NCIMB 8253 / ATH 2.4.1.) (Rhodobacter sphaeroides)).